Here is a 333-residue protein sequence, read N- to C-terminus: MMLILSILSIIAFAAASPVPSIDENIRVLEHRAVTVTTQDLSNFRFYLQHADAAYCNFNTAVGKPVHCGAGNCPDVEKDSAIVVGSVVGTKTGIGAYVATDNARKEIVVSVRGSINVRNWITNFNFGQKTCDLVAGCGVHTGFLEAWEEVAANIKAAVSAAKTANPTFKFVVTGHSLGGAVATVAAAYLRKDGFPFDLYTYGSPRVGNDFFANFVTQQTGAEYRVTHGDDPVPRLPPIVFGYRHTSPEYWLDGGPLDKDYTVSEIKVCDGIANVMCNGGTIGLDILAHITYFQSMATCAPIAIPWKRDMSDEELDKKLTQYSEMDQEFVKQMT.

Residues 1–16 (MMLILSILSIIAFAAA) form the signal peptide. 2 cysteine pairs are disulfide-bonded: cysteine 56/cysteine 268 and cysteine 276/cysteine 298. Serine 176 acts as the Nucleophile in catalysis. Active-site residues include aspartate 230 and histidine 288.

Belongs to the AB hydrolase superfamily. Lipase family. Class 3 subfamily.

The protein localises to the secreted. It carries out the reaction a monoacylglycerol + H2O = glycerol + a fatty acid + H(+). The catalysed reaction is a diacylglycerol + H2O = a monoacylglycerol + a fatty acid + H(+). Functionally, secreted mono- and diacylglycerol lipase that allows the use of hydrolyzed lipids as carbon source and might play a role in pathogenicity. Shows lipolytic activity towards olive oil and p-nitrophenylpalmitate. The chain is Secreted mono- and diacylglycerol lipase 1 from Fusarium solani (Filamentous fungus).